The primary structure comprises 470 residues: Aspartate-semialdehyde dehydrogenase 1 (470 aa).

Residues T145 and K171 each coordinate NAD(+). D243 is a catalytic residue. G245 lines the NAD(+) pocket. C277 is an active-site residue. Residue E371 participates in NAD(+) binding.

Belongs to the aldehyde dehydrogenase family.

It catalyses the reaction L-aspartate 4-semialdehyde + NAD(+) + H2O = L-aspartate + NADH + 2 H(+). In terms of biological role, dehydrogenase involved in the degradation of canavanine, the delta-oxa-analog of arginine, allowing growth on canavanine as sole nitrogen and carbon source. Probably catalyzes the NAD(+)-dependent oxidation of L-aspartate-semialdehyde to L-aspartate. The sequence is that of Aspartate-semialdehyde dehydrogenase 1 from Pseudomonas canavaninivorans.